Here is a 185-residue protein sequence, read N- to C-terminus: Ribosome-recycling factor (185 aa).

This sequence belongs to the RRF family.

The protein resides in the cytoplasm. In terms of biological role, responsible for the release of ribosomes from messenger RNA at the termination of protein biosynthesis. May increase the efficiency of translation by recycling ribosomes from one round of translation to another. The polypeptide is Ribosome-recycling factor (Chromobacterium violaceum (strain ATCC 12472 / DSM 30191 / JCM 1249 / CCUG 213 / NBRC 12614 / NCIMB 9131 / NCTC 9757 / MK)).